The primary structure comprises 115 residues: Ribonuclease P protein component (115 aa).

It belongs to the RnpA family. Consists of a catalytic RNA component (M1 or rnpB) and a protein subunit.

It catalyses the reaction Endonucleolytic cleavage of RNA, removing 5'-extranucleotides from tRNA precursor.. In terms of biological role, RNaseP catalyzes the removal of the 5'-leader sequence from pre-tRNA to produce the mature 5'-terminus. It can also cleave other RNA substrates such as 4.5S RNA. The protein component plays an auxiliary but essential role in vivo by binding to the 5'-leader sequence and broadening the substrate specificity of the ribozyme. This is Ribonuclease P protein component from Bacillus cereus (strain G9842).